We begin with the raw amino-acid sequence, 204 residues long: NAD(P)H dehydrogenase (quinone) (204 aa).

The Flavodoxin-like domain occupies 3 to 194; the sequence is VLIVFYSMYG…AGARYQGRHV (192 aa). Residues 9 to 14 and 82 to 84 each bind FMN; these read SMYGHI and TRF. Position 11 (tyrosine 11) interacts with NAD(+). Tryptophan 102 contributes to the substrate binding site. Histidine 138 contributes to the FMN binding site.

Belongs to the WrbA family. FMN is required as a cofactor.

It carries out the reaction a quinone + NADH + H(+) = a quinol + NAD(+). The catalysed reaction is a quinone + NADPH + H(+) = a quinol + NADP(+). The protein is NAD(P)H dehydrogenase (quinone) of Syntrophobacter fumaroxidans (strain DSM 10017 / MPOB).